The sequence spans 338 residues: Replication factor C small subunit (338 aa).

ATP is bound at residue 53-60; the sequence is GPPGVGKT.

It belongs to the activator 1 small subunits family. RfcS subfamily. In terms of assembly, heteromultimer composed of small subunits (RfcS) and large subunits (RfcL).

In terms of biological role, part of the RFC clamp loader complex which loads the PCNA sliding clamp onto DNA. The protein is Replication factor C small subunit of Methanosarcina mazei (strain ATCC BAA-159 / DSM 3647 / Goe1 / Go1 / JCM 11833 / OCM 88) (Methanosarcina frisia).